Consider the following 917-residue polypeptide: MSMDMTTRMFKEEGWIRKKCPKCGKYFWTLDPDRETCGDPPCDEYQFIGKPGIPKKYTLDEMREKFLSFFEKHESYPHGRVKRYPVLPRWRDDVLLVGASIMDFQPWVISGEADPPANPLTISQPSIRFTDIDNVGITGRHFTIFEMMAHHAFNYPGKPIYWMDETVELAFEFFTKELKMKPEDITFKENPWAGGGNAGPAFEVLYRGLEVATLVFMQYKKAPADADPSQVVEIKGDYYVPMETRVVDTGYGLERLVWMSHGTPTAYDAVLGYVIEPLKKMAGVEKIDERILMENSRLAGMFDIEDMGDLRYLREQVAKRVGISVEELEKAVRPYELIYAIADHTKALTFMLADGVIPSNVKAGYLARLLIRKSIRHLRELGLEIPLAEIVAMHIKELSPTFPEFKEMEDVILDIINVEEKRYAETLRRGSDLVKREIAKLKKKGINELPLEKLILFYESHGLTPEIVAEVAEKEGIKVNIPDNFYTLVAKEAEKQAEKKEAAEYVVDFELVKDLPDTRTLYYEDPFMKEFDARVLKVIADWVVLDQTAFYPEGGGQPYDTGVLEVNGEKVKVTNVQKVGKVILHKVEKPELFKEGVTVHGRLDWDRRIQHMRHHTGTHVLMGALVRVLGKHVWQAGSQLHTDWARLDISHYKRITEEELREIERLANRVVMENRKVTWEWLPRTEAEMKYGFRLYQGGVVPGRVIRVLKIEDWDVQACGGTHLPNTGLIGPIKILRTERIQDGVERIIFAAGEAAINWMQETERLLKRTAEIFRVPPEKVPETAERFFNEWKEARKEVEKLRKELAKLLVYELQEKVEKVGNVEFIGAVVEGTIDDLREAANRLRKENRVVVLISREGHFVVAVGDGLDLKAGELAKVITSVAGGGGGGRKELAQGRIKNPLKAEEAIEEVKKMLG.

Residues H615, H619, C719, and H723 each contribute to the Zn(2+) site.

Belongs to the class-II aminoacyl-tRNA synthetase family. Zn(2+) serves as cofactor.

It localises to the cytoplasm. It catalyses the reaction tRNA(Ala) + L-alanine + ATP = L-alanyl-tRNA(Ala) + AMP + diphosphate. Functionally, catalyzes the attachment of alanine to tRNA(Ala) in a two-step reaction: alanine is first activated by ATP to form Ala-AMP and then transferred to the acceptor end of tRNA(Ala). Also edits incorrectly charged Ser-tRNA(Ala) and Gly-tRNA(Ala) via its editing domain. This chain is Alanine--tRNA ligase, found in Thermococcus kodakarensis (strain ATCC BAA-918 / JCM 12380 / KOD1) (Pyrococcus kodakaraensis (strain KOD1)).